Consider the following 205-residue polypeptide: MSKRESAKYKIDRRLGENIWGRPKSPVNRREYGPGQHGQRRKGKLSDFGVQLRAKQKLKGFYGDISEKQFRKTYEEAARRKGDTGENLIGLLESRLDAVVYRAKFVPTIFAARQFINHGHVNVNGRRVNIQSYRLKVGDVVEVREKSKQLAIVLEAVQLAERDVPDYIDVDHNKMVATYNRVPGLLDVPYAVQMEPNLVVEFYSR.

Residues 19-45 (IWGRPKSPVNRREYGPGQHGQRRKGKL) are disordered. Residues 94 to 157 (SRLDAVVYRA…KQLAIVLEAV (64 aa)) form the S4 RNA-binding domain.

This sequence belongs to the universal ribosomal protein uS4 family. Part of the 30S ribosomal subunit. Contacts protein S5. The interaction surface between S4 and S5 is involved in control of translational fidelity.

One of the primary rRNA binding proteins, it binds directly to 16S rRNA where it nucleates assembly of the body of the 30S subunit. In terms of biological role, with S5 and S12 plays an important role in translational accuracy. In Brucella suis biovar 1 (strain 1330), this protein is Small ribosomal subunit protein uS4.